A 406-amino-acid polypeptide reads, in one-letter code: CCA-adding enzyme (406 aa).

Residues G32 and R35 each coordinate ATP. CTP-binding residues include G32 and R35. 2 residues coordinate Mg(2+): D45 and D47. Residues R116, D159, R162, R165, and R168 each coordinate ATP. Residues R116, D159, R162, R165, and R168 each contribute to the CTP site.

Belongs to the tRNA nucleotidyltransferase/poly(A) polymerase family. Bacterial CCA-adding enzyme type 3 subfamily. Homodimer. It depends on Mg(2+) as a cofactor.

The enzyme catalyses a tRNA precursor + 2 CTP + ATP = a tRNA with a 3' CCA end + 3 diphosphate. It carries out the reaction a tRNA with a 3' CCA end + 2 CTP + ATP = a tRNA with a 3' CCACCA end + 3 diphosphate. Functionally, catalyzes the addition and repair of the essential 3'-terminal CCA sequence in tRNAs without using a nucleic acid template. Adds these three nucleotides in the order of C, C, and A to the tRNA nucleotide-73, using CTP and ATP as substrates and producing inorganic pyrophosphate. tRNA 3'-terminal CCA addition is required both for tRNA processing and repair. Also involved in tRNA surveillance by mediating tandem CCA addition to generate a CCACCA at the 3' terminus of unstable tRNAs. While stable tRNAs receive only 3'-terminal CCA, unstable tRNAs are marked with CCACCA and rapidly degraded. The protein is CCA-adding enzyme of Enterococcus faecalis (strain ATCC 700802 / V583).